A 210-amino-acid chain; its full sequence is Large ribosomal subunit protein uL4 (210 aa).

The tract at residues 44–79 (QHQGTHKVKTRSEVSGGGRKPYRQKGTGNARRGSSR) is disordered.

Belongs to the universal ribosomal protein uL4 family. In terms of assembly, part of the 50S ribosomal subunit.

In terms of biological role, one of the primary rRNA binding proteins, this protein initially binds near the 5'-end of the 23S rRNA. It is important during the early stages of 50S assembly. It makes multiple contacts with different domains of the 23S rRNA in the assembled 50S subunit and ribosome. Functionally, forms part of the polypeptide exit tunnel. The chain is Large ribosomal subunit protein uL4 from Chloroherpeton thalassium (strain ATCC 35110 / GB-78).